We begin with the raw amino-acid sequence, 115 residues long: MGSQVHLLSFLLLWISDTRAETTLTQSPAFMSATPGDKVNISCKASQDIDDDMNWYQQKPGEAAIFIIQEATTLVPGIPPRFSGSGYGTDFTLTINNIESEDAAYYFCLQHDNFP.

The first 20 residues, 1-20 (MGSQVHLLSFLLLWISDTRA), serve as a signal peptide directing secretion. A framework-1 region spans residues 21 to 43 (ETTLTQSPAFMSATPGDKVNISC). The 94-residue stretch at 22-115 (TTLTQSPAFM…YFCLQHDNFP (94 aa)) folds into the Ig-like domain. Residue Asn40 is glycosylated (N-linked (GlcNAc...) asparagine). Position 42 is a phosphoserine (Ser42). Cys43 and Cys108 form a disulfide bridge. The tract at residues 44–54 (KASQDIDDDMN) is complementarity-determining-1. Residues 55-69 (WYQQKPGEAAIFIIQ) form a framework-2 region. The segment at 70–76 (EATTLVP) is complementarity-determining-2. Residues 77-108 (GIPPRFSGSGYGTDFTLTINNIESEDAAYYFC) form a framework-3 region. A complementarity-determining-3 region spans residues 109–115 (LQHDNFP).

In terms of assembly, immunoglobulins are composed of two identical heavy chains and two identical light chains; disulfide-linked.

The protein localises to the secreted. Its subcellular location is the cell membrane. In terms of biological role, v region of the variable domain of immunoglobulin light chains that participates in the antigen recognition. Immunoglobulins, also known as antibodies, are membrane-bound or secreted glycoproteins produced by B lymphocytes. In the recognition phase of humoral immunity, the membrane-bound immunoglobulins serve as receptors which, upon binding of a specific antigen, trigger the clonal expansion and differentiation of B lymphocytes into immunoglobulins-secreting plasma cells. Secreted immunoglobulins mediate the effector phase of humoral immunity, which results in the elimination of bound antigens. The antigen binding site is formed by the variable domain of one heavy chain, together with that of its associated light chain. Thus, each immunoglobulin has two antigen binding sites with remarkable affinity for a particular antigen. The variable domains are assembled by a process called V-(D)-J rearrangement and can then be subjected to somatic hypermutations which, after exposure to antigen and selection, allow affinity maturation for a particular antigen. In Homo sapiens (Human), this protein is Immunoglobulin kappa variable 5-2.